We begin with the raw amino-acid sequence, 481 residues long: Zinc metalloproteinase/disintegrin (481 aa).

The signal sequence occupies residues 1 to 20 (MIQVLLVTICLAVFPYQGSS). Residues 21-190 (IILESGNVDD…KASQLYLTPE (170 aa)) constitute a propeptide that is removed on maturation. One can recognise a Peptidase M12B domain in the interval 197-392 (RYIKLAIVVD…DNPQCILNAP (196 aa)). Disulfide bonds link Cys308–Cys387, Cys349–Cys371, and Cys351–Cys354. His333 lines the Zn(2+) pocket. The active site involves Glu334. His337 and His343 together coordinate Zn(2+). The propeptide occupies 393-408 (LRTDTVSTPVSGNEFL). The region spanning 400–481 (TPVSGNEFLE…GDCPRNPFHA (82 aa)) is the Disintegrin domain. 6 disulfide bridges follow: Cys414-Cys429, Cys416-Cys424, Cys423-Cys446, Cys437-Cys443, Cys442-Cys467, and Cys455-Cys474. Positions 459-461 (RGD) match the Cell attachment site motif.

This sequence belongs to the venom metalloproteinase (M12B) family. P-II subfamily. P-IIa sub-subfamily. In terms of assembly, monomer. It depends on Zn(2+) as a cofactor. As to expression, expressed by the venom gland.

The protein resides in the secreted. Functionally, impairs hemostasis in the envenomed animal. In terms of biological role, disintegrin elegantin-2a-f: inhibits platelet aggregation induced by ADP, thrombin, platelet-activating factor and collagen. Acts by inhibiting fibrinogen interaction with platelet receptors GPIIb/GPIIIa (ITGA2B/ITGB3). This Protobothrops elegans (Elegant pitviper) protein is Zinc metalloproteinase/disintegrin.